The primary structure comprises 743 residues: Phosphoribosylformylglycinamidine synthase subunit PurL (743 aa).

His54 is an active-site residue. ATP-binding residues include Tyr57 and Lys96. A Mg(2+)-binding site is contributed by Glu98. Substrate-binding positions include 99-102 (SHNH) and Arg121. Catalysis depends on His100, which acts as the Proton acceptor. Asp122 contacts Mg(2+). A substrate-binding site is contributed by Gln245. Asp273 is a Mg(2+) binding site. 317 to 319 (ESQ) serves as a coordination point for substrate. The ATP site is built by Asp500 and Gly537. Residue Asn538 participates in Mg(2+) binding. Ser540 contributes to the substrate binding site.

It belongs to the FGAMS family. As to quaternary structure, monomer. Part of the FGAM synthase complex composed of 1 PurL, 1 PurQ and 2 PurS subunits.

The protein localises to the cytoplasm. It carries out the reaction N(2)-formyl-N(1)-(5-phospho-beta-D-ribosyl)glycinamide + L-glutamine + ATP + H2O = 2-formamido-N(1)-(5-O-phospho-beta-D-ribosyl)acetamidine + L-glutamate + ADP + phosphate + H(+). Its pathway is purine metabolism; IMP biosynthesis via de novo pathway; 5-amino-1-(5-phospho-D-ribosyl)imidazole from N(2)-formyl-N(1)-(5-phospho-D-ribosyl)glycinamide: step 1/2. Functionally, part of the phosphoribosylformylglycinamidine synthase complex involved in the purines biosynthetic pathway. Catalyzes the ATP-dependent conversion of formylglycinamide ribonucleotide (FGAR) and glutamine to yield formylglycinamidine ribonucleotide (FGAM) and glutamate. The FGAM synthase complex is composed of three subunits. PurQ produces an ammonia molecule by converting glutamine to glutamate. PurL transfers the ammonia molecule to FGAR to form FGAM in an ATP-dependent manner. PurS interacts with PurQ and PurL and is thought to assist in the transfer of the ammonia molecule from PurQ to PurL. This is Phosphoribosylformylglycinamidine synthase subunit PurL from Bacillus pumilus (strain SAFR-032).